The primary structure comprises 1880 residues: Nonribosomal peptide synthetase otaB (1880 aa).

Positions 205-594 (AQAVERGNSI…SVSFVGRRQA (390 aa)) are adenylation 1. A Carrier domain is found at 728–804 (LPLSPLERQI…ELGAHLEQEA (77 aa)). Ser765 carries the O-(pantetheine 4'-phosphoryl)serine modification. The condensation stretch occupies residues 840–1250 (EDVYPCTALQ…LLSPQDQQQL (411 aa)). Residues 1269–1665 (QRQCLAHPQK…GRKDRQVKLR (397 aa)) form an adenylation 2 region.

Belongs to the NRP synthetase family.

The catalysed reaction is 7-carboxymellein + L-phenylalanine + ATP = ochratoxin B + ADP + phosphate + H(+). The protein operates within mycotoxin biosynthesis. In terms of biological role, nonribosomal peptide synthetase; part of the gene cluster that mediates the biosynthesis of ochratoxin A (OTA), a mycotoxin composed of a chlorinated type I polyketide dihydroisocoumarin moiety linked to L-phenylalanine, and demonstrated to have nephrotoxic, immunotoxic, genotoxic, neurotoxic, and teratogenic properties. OtaB is responsible for the linking of phenylalanine to the dihydroisocoumarin ring. The pathway begins with the highly reducing polyketide synthase otaA that catalyzes the formation of the isocoumarin group during the initial stages of biosynthesis, starting from one acetate and 4 malonate units, to originate the characteristic pentaketide skeleton 7-methylmellein (7-MM) of the OTA molecule. The newly identified cyclase otaY might be involved in the polyketide cyclization reaction during the initial steps of the OTA biosynthesis. 7-MM is then oxidized into 7-carboxymellein (also called ochratoxin beta) by the cytochrome P450 monooxygenase otaC. The NRPS encoded by the otaB gene is involved in the linking of phenylalanine to the dihydroisocoumarin ring. The reaction catalyzed by NRPS results in the production of ochratoxin B (OTB), which is the non-chlorinated analog of OTA and which subsequently serves as the substrate of the halogenase otaD for chlorination activity to form the final molecular structure of OTA, containing a chlorine atom in the C-5 position of the molecule. This is Nonribosomal peptide synthetase otaB from Aspergillus niger (strain ATCC MYA-4892 / CBS 513.88 / FGSC A1513).